A 185-amino-acid polypeptide reads, in one-letter code: Ribosome-recycling factor (185 aa).

Belongs to the RRF family.

Its subcellular location is the cytoplasm. Functionally, responsible for the release of ribosomes from messenger RNA at the termination of protein biosynthesis. May increase the efficiency of translation by recycling ribosomes from one round of translation to another. This Clostridium botulinum (strain Eklund 17B / Type B) protein is Ribosome-recycling factor.